Consider the following 337-residue polypeptide: Holliday junction branch migration complex subunit RuvB (337 aa).

The segment at 1 to 179 is large ATPase domain (RuvB-L); the sequence is MTHQVSVLHQ…FSFSGRVSYY (179 aa). Residues Leu18, Arg19, Gly60, Lys63, Thr64, Ser65, 126 to 128, Arg169, Tyr179, and Arg216 each bind ATP; that span reads EDY. Thr64 provides a ligand contact to Mg(2+). Residues 180-250 are small ATPAse domain (RuvB-S); it reads SDEDLATILK…VAEKALSMLL (71 aa). Residues 253 to 337 are head domain (RuvB-H); that stretch reads DWGLNEIDIK…DNLQILGEEK (85 aa). 2 residues coordinate DNA: Lys308 and Arg313.

The protein belongs to the RuvB family. As to quaternary structure, homohexamer. Forms an RuvA(8)-RuvB(12)-Holliday junction (HJ) complex. HJ DNA is sandwiched between 2 RuvA tetramers; dsDNA enters through RuvA and exits via RuvB. An RuvB hexamer assembles on each DNA strand where it exits the tetramer. Each RuvB hexamer is contacted by two RuvA subunits (via domain III) on 2 adjacent RuvB subunits; this complex drives branch migration. In the full resolvosome a probable DNA-RuvA(4)-RuvB(12)-RuvC(2) complex forms which resolves the HJ.

It localises to the cytoplasm. The catalysed reaction is ATP + H2O = ADP + phosphate + H(+). Its function is as follows. The RuvA-RuvB-RuvC complex processes Holliday junction (HJ) DNA during genetic recombination and DNA repair, while the RuvA-RuvB complex plays an important role in the rescue of blocked DNA replication forks via replication fork reversal (RFR). RuvA specifically binds to HJ cruciform DNA, conferring on it an open structure. The RuvB hexamer acts as an ATP-dependent pump, pulling dsDNA into and through the RuvAB complex. RuvB forms 2 homohexamers on either side of HJ DNA bound by 1 or 2 RuvA tetramers; 4 subunits per hexamer contact DNA at a time. Coordinated motions by a converter formed by DNA-disengaged RuvB subunits stimulates ATP hydrolysis and nucleotide exchange. Immobilization of the converter enables RuvB to convert the ATP-contained energy into a lever motion, pulling 2 nucleotides of DNA out of the RuvA tetramer per ATP hydrolyzed, thus driving DNA branch migration. The RuvB motors rotate together with the DNA substrate, which together with the progressing nucleotide cycle form the mechanistic basis for DNA recombination by continuous HJ branch migration. Branch migration allows RuvC to scan DNA until it finds its consensus sequence, where it cleaves and resolves cruciform DNA. The chain is Holliday junction branch migration complex subunit RuvB from Chlamydia felis (strain Fe/C-56) (Chlamydophila felis).